Here is a 60-residue protein sequence, read N- to C-terminus: Sec-independent protein translocase protein TatA (60 aa).

A helical transmembrane segment spans residues 1–21 (MTPAGPAQLLIVALVVIVLFG).

This sequence belongs to the TatA/E family. In terms of assembly, the Tat system comprises two distinct complexes: a TatABC complex, containing multiple copies of TatA, TatB and TatC subunits, and a separate TatA complex, containing only TatA subunits. Substrates initially bind to the TatABC complex, which probably triggers association of the separate TatA complex to form the active translocon.

Its subcellular location is the cell membrane. Its function is as follows. Part of the twin-arginine translocation (Tat) system that transports large folded proteins containing a characteristic twin-arginine motif in their signal peptide across membranes. TatA could form the protein-conducting channel of the Tat system. This chain is Sec-independent protein translocase protein TatA, found in Corynebacterium glutamicum (strain R).